A 190-amino-acid polypeptide reads, in one-letter code: dCTP deaminase, dUMP-forming (190 aa).

Residues 101–106, D119, 127–129, Q148, Y162, K170, and Q174 contribute to the dCTP site; these read KSSLGR and TLE. The Proton donor/acceptor role is filled by E129. The disordered stretch occupies residues 160-190; it reads HPYGSSRAGSKYQGQRGPTPSRSCQNFIRST. The segment covering 171-190 has biased composition (polar residues); the sequence is YQGQRGPTPSRSCQNFIRST.

Belongs to the dCTP deaminase family. In terms of assembly, homotrimer.

It carries out the reaction dCTP + 2 H2O = dUMP + NH4(+) + diphosphate. Its pathway is pyrimidine metabolism; dUMP biosynthesis; dUMP from dCTP: step 1/1. In terms of biological role, bifunctional enzyme that catalyzes both the deamination of dCTP to dUTP and the hydrolysis of dUTP to dUMP without releasing the toxic dUTP intermediate. In Mycobacterium bovis (strain ATCC BAA-935 / AF2122/97), this protein is dCTP deaminase, dUMP-forming.